Reading from the N-terminus, the 407-residue chain is Vancomycin aglycone glucosyltransferase (407 aa).

Belongs to the glycosyltransferase 28 family.

The catalysed reaction is vancomycin aglycone + UDP-alpha-D-glucose = devancoaminyl-vancomycin + UDP. The protein operates within antibiotic biosynthesis; vancomycin biosynthesis. Glucosyltransferase that transfers glucose to the 4-OH-Phegly(4) residue of vancomycin aglycone (AGV) to produce devancoaminyl-vancomycin (DVV) in the biosynthesis of glycopeptide antibiotic chloroeremomycin, a member of the vancomycin group of antibiotics. This Amycolatopsis orientalis (Nocardia orientalis) protein is Vancomycin aglycone glucosyltransferase (gtfB).